Here is a 75-residue protein sequence, read N- to C-terminus: Transcription attenuation protein MtrB (75 aa).

Belongs to the MtrB family. Oligomer of 11 identical subunits arranged in doughnut-like structure.

Functionally, required for transcription attenuation control in the trp operon. This trans-acting factor binds to trinucleotide repeats (GAG or UAG) located in the trp leader transcript causing transcription termination. Binds the leader RNA only in presence of L-tryptophan. This chain is Transcription attenuation protein MtrB (mtrB), found in Bacillus subtilis (strain 168).